We begin with the raw amino-acid sequence, 210 residues long: ATP-dependent Clp protease proteolytic subunit (210 aa).

The Nucleophile role is filled by Ser111. His136 is an active-site residue.

It belongs to the peptidase S14 family. Fourteen ClpP subunits assemble into 2 heptameric rings which stack back to back to give a disk-like structure with a central cavity, resembling the structure of eukaryotic proteasomes.

Its subcellular location is the cytoplasm. The catalysed reaction is Hydrolysis of proteins to small peptides in the presence of ATP and magnesium. alpha-casein is the usual test substrate. In the absence of ATP, only oligopeptides shorter than five residues are hydrolyzed (such as succinyl-Leu-Tyr-|-NHMec, and Leu-Tyr-Leu-|-Tyr-Trp, in which cleavage of the -Tyr-|-Leu- and -Tyr-|-Trp bonds also occurs).. Functionally, cleaves peptides in various proteins in a process that requires ATP hydrolysis. Has a chymotrypsin-like activity. Plays a major role in the degradation of misfolded proteins. The protein is ATP-dependent Clp protease proteolytic subunit of Halorhodospira halophila (strain DSM 244 / SL1) (Ectothiorhodospira halophila (strain DSM 244 / SL1)).